An 838-amino-acid chain; its full sequence is U1 SNP1-associating protein 1 (838 aa).

Residues 1–536 (MSEYLAQTPC…VRPLRNSFPL (536 aa)) are Cytoplasmic-facing. Positions 31 to 240 (HPLSTVGRLL…DFAPAHNSFF (210 aa)) are required for ERAD-L function. One can recognise a Ubiquitin-like domain in the interval 259 to 318 (ERFVLEFISDATLSITQMNVKPDTTVKQVKDFICSVYTHSLNLRRNDIKLIYKGQLLHEN). Residues 319-418 (NFAGNSSKIS…VPTDELYRKC (100 aa)) are important for HRD1 oligomer formation. An interaction with HRD1 region spans residues 345-535 (QEYTESGPGF…VVRPLRNSFP (191 aa)). Residues Ser-374, Ser-376, and Ser-379 each carry the phosphoserine modification. Positions 437–490 (SSYLSVIKGDYGEIKIPISSNDYRINGDNILLSPSAIEQLESALNFKIERPRDS) are required for ERAD-L function and HRD1 oligomer formation. Residues 537–559 (LLVLIRTFYLIGYNSLVPFFIIL) form a helical membrane-spanning segment. Residues 560-563 (EFGS) are Extracellular-facing. Residues 564-583 (FLPWKYIILLSLLFIFRTVW) form a helical membrane-spanning segment. Residues 584–838 (NTQEVWNLWR…QPHLYIPDED (255 aa)) lie on the Cytoplasmic side of the membrane. Positions 584-838 (NTQEVWNLWR…QPHLYIPDED (255 aa)) are interaction with DER1. Positions 795–838 (ARDREQPAPSAQQQENEDEALIIPDEEEPTATGAQPHLYIPDED) are disordered. Acidic residues predominate over residues 809 to 823 (ENEDEALIIPDEEEP).

As to quaternary structure, component of the HRD1 ubiquitin ligase complex which contains the E3 ligase HRD1, its cofactors HRD3, USA1 and DER1, substrate recruiting factor YOS9 and CDC48-binding protein UBX2. Within the complex, interacts directly with HRD1 (via N-terminus) and DER1 (via C-terminus) and indirectly with HRD3. In ERAD-L, HRD3 and YOS9 jointly bind misfolded glycoproteins in the endoplasmic reticulum (ER) lumen. Movement of ERAD-L substrates through the ER membrane is facilitated by HRD1 and DER1 which have lateral gates facing each other and which distort the membrane region between the lateral gates, making it much thinner than a normal phospholipid bilayer. Substrates insert into the membrane as a hairpin loop with one strand interacting with DER1 and the other with HRD1. The HRD1 complex interacts with the heterotrimeric CDC48-NPL4-UFD1 ATPase complex which is recruited by UBX2 via its interaction with CDC48 and which moves ubiquitinated substrates to the cytosol for targeting to the proteasome.

It is found in the endoplasmic reticulum membrane. Scaffold protein of the endoplasmic reticulum-associated degradation (ERAD) (also known as endoplasmic reticulum quality control, ERQC) pathway involved in ubiquitin-dependent degradation of misfolded endoplasmic reticulum proteins. Component of the HRD1 ubiquitin ligase complex, which is part of the ERAD-L and ERAD-M pathways responsible for the rapid degradation of soluble lumenal and membrane proteins with misfolded lumenal domains (ERAD-L), or ER-membrane proteins with misfolded transmembrane domains (ERAD-M). Has multiple functions in ERAD including recruitment of DER1 to the HRD1 ubiquitin ligase, and regulation of HRD1 activity. Involved in oligomerization of HRD1 and in HRD1 autoubiquitination and degradation. The protein is U1 SNP1-associating protein 1 (USA1) of Saccharomyces cerevisiae (strain ATCC 204508 / S288c) (Baker's yeast).